We begin with the raw amino-acid sequence, 1091 residues long: Isoleucine--tRNA ligase (1091 aa).

The 'HIGH' region signature appears at 48–58; the sequence is PFATGLPHFGH. The 'KMSKS' region motif lies at 625-629; sequence KMSKA. Position 628 (Lys-628) interacts with ATP.

This sequence belongs to the class-I aminoacyl-tRNA synthetase family. IleS type 2 subfamily. As to quaternary structure, monomer. Requires Zn(2+) as cofactor.

The protein resides in the cytoplasm. It carries out the reaction tRNA(Ile) + L-isoleucine + ATP = L-isoleucyl-tRNA(Ile) + AMP + diphosphate. Catalyzes the attachment of isoleucine to tRNA(Ile). As IleRS can inadvertently accommodate and process structurally similar amino acids such as valine, to avoid such errors it has two additional distinct tRNA(Ile)-dependent editing activities. One activity is designated as 'pretransfer' editing and involves the hydrolysis of activated Val-AMP. The other activity is designated 'posttransfer' editing and involves deacylation of mischarged Val-tRNA(Ile). This Treponema pallidum (strain Nichols) protein is Isoleucine--tRNA ligase.